Consider the following 469-residue polypeptide: tRNA(Ile)-lysidine synthase (469 aa).

26 to 31 (SGGPDS) contacts ATP.

Belongs to the tRNA(Ile)-lysidine synthase family.

It localises to the cytoplasm. The enzyme catalyses cytidine(34) in tRNA(Ile2) + L-lysine + ATP = lysidine(34) in tRNA(Ile2) + AMP + diphosphate + H(+). Functionally, ligates lysine onto the cytidine present at position 34 of the AUA codon-specific tRNA(Ile) that contains the anticodon CAU, in an ATP-dependent manner. Cytidine is converted to lysidine, thus changing the amino acid specificity of the tRNA from methionine to isoleucine. The sequence is that of tRNA(Ile)-lysidine synthase from Clostridium perfringens (strain 13 / Type A).